We begin with the raw amino-acid sequence, 72 residues long: Probable neurotoxin pcD-993 (72 aa).

The signal sequence occupies residues 1-19 (MNYLVMISFALLLVIGVES). Residues 21-72 (RDGYFVEPDNCVVHCMPSSEMCDRGCKHNGATSGSCKAFSKGGNACWCKGLR) form the LCN-type CS-alpha/beta domain. 3 cysteine pairs are disulfide-bonded: C35-C56, C42-C66, and C46-C68. Residue R72 is a propeptide, removed by a carboxypeptidase.

This sequence belongs to the long (3 C-C) scorpion toxin superfamily. In terms of tissue distribution, expressed by the venom gland.

Its subcellular location is the secreted. This Androctonus australis (Sahara scorpion) protein is Probable neurotoxin pcD-993.